Consider the following 179-residue polypeptide: ATP-dependent protease subunit HslV (179 aa).

Residue Thr7 is part of the active site. Residues Gly162, Cys165, and Thr168 each coordinate Na(+).

The protein belongs to the peptidase T1B family. HslV subfamily. As to quaternary structure, a double ring-shaped homohexamer of HslV is capped on each side by a ring-shaped HslU homohexamer. The assembly of the HslU/HslV complex is dependent on binding of ATP.

The protein localises to the cytoplasm. It carries out the reaction ATP-dependent cleavage of peptide bonds with broad specificity.. Its activity is regulated as follows. Allosterically activated by HslU binding. Functionally, protease subunit of a proteasome-like degradation complex believed to be a general protein degrading machinery. This chain is ATP-dependent protease subunit HslV, found in Bordetella petrii (strain ATCC BAA-461 / DSM 12804 / CCUG 43448).